The chain runs to 1025 residues: Multidrug resistance protein MdtC (1025 aa).

12 consecutive transmembrane segments (helical) span residues 3–23 (FFAL…AITL), 333–353 (EVEQ…FLFL), 360–380 (IIPA…MYLC), 387–407 (LSLM…IVVL), 431–451 (VGFT…PLLL), 463–483 (FAVT…TLTP), 528–548 (LVGV…ISIP), 853–873 (VILI…LYES), 875–895 (VHPL…LLAL), 897–917 (LFNA…IGIV), 953–973 (PIMM…LSGG), and 984–1004 (ITIV…TPVV).

This sequence belongs to the resistance-nodulation-cell division (RND) (TC 2.A.6) family. MdtC subfamily. Part of a tripartite efflux system composed of MdtA, MdtB and MdtC. MdtC forms a heteromultimer with MdtB.

It is found in the cell inner membrane. Functionally, the MdtABC tripartite complex confers resistance against novobiocin and deoxycholate. In Escherichia coli O127:H6 (strain E2348/69 / EPEC), this protein is Multidrug resistance protein MdtC.